The sequence spans 232 residues: Large ribosomal subunit protein uL1 (232 aa).

It belongs to the universal ribosomal protein uL1 family. In terms of assembly, part of the 50S ribosomal subunit.

Binds directly to 23S rRNA. The L1 stalk is quite mobile in the ribosome, and is involved in E site tRNA release. Functionally, protein L1 is also a translational repressor protein, it controls the translation of the L11 operon by binding to its mRNA. This Marinobacter nauticus (strain ATCC 700491 / DSM 11845 / VT8) (Marinobacter aquaeolei) protein is Large ribosomal subunit protein uL1.